The primary structure comprises 395 residues: MVQSLHEFLEENINYLKENGLYNEIDTIEGANGPEIKINGKSYINLSSNNYLGLATNEDLKSAAKAAIDTHGVGAGAVRTINGTLDLHDELEETLAKFKGTEAAIAYQSGFNCNMAAISAVMNKNDAILSDELNHASIIDGCRLSKAKIIRVNHSDMDDLRAKAKEAVESGQYNKVMYITDGVFSMDGDVAKLPEIVEIAEEFGLLTYVDDAHGSGVMGKGAGTVKHFGLQDKIDFQIGTLSKAIGVVGGYVAGTKELIDWLKAQSRPFLFSTSLAPGDTKAITEAVKKLMDSTELHDKLWDNAQYLKNGLSKLGYDTGESETPITPVIIGDEKTTQEFSKRLKDEGVYVKSIVFPTVPRGTGRVRNMPTAAHTKDMLDEAIAAYEKVGKEMKLI.

Pyridoxal 5'-phosphate is bound at residue 110–111 (GF). His-135 lines the substrate pocket. Residues Ser-185, 210–213 (DDAH), and 240–243 (TLSK) contribute to the pyridoxal 5'-phosphate site. Lys-243 is modified (N6-(pyridoxal phosphate)lysine). Residue Thr-357 coordinates substrate.

This sequence belongs to the class-II pyridoxal-phosphate-dependent aminotransferase family. Homodimer. Pyridoxal 5'-phosphate is required as a cofactor.

The sequence is that of Putative pyridoxal phosphate-dependent acyltransferase from Staphylococcus aureus (strain Mu50 / ATCC 700699).